Reading from the N-terminus, the 334-residue chain is Tryptophan--tRNA ligase (334 aa).

ATP is bound by residues 11-13 (QPS) and 19-20 (GN). The short motif at 12-20 (PSGELTIGN) is the 'HIGH' region element. D135 is an L-tryptophan binding site. ATP contacts are provided by residues 147–149 (GDD), I186, and 195–199 (KMSKS). The 'KMSKS' region motif lies at 195–199 (KMSKS).

It belongs to the class-I aminoacyl-tRNA synthetase family. In terms of assembly, homodimer.

The protein resides in the cytoplasm. It carries out the reaction tRNA(Trp) + L-tryptophan + ATP = L-tryptophyl-tRNA(Trp) + AMP + diphosphate + H(+). Catalyzes the attachment of tryptophan to tRNA(Trp). This chain is Tryptophan--tRNA ligase, found in Haemophilus influenzae (strain ATCC 51907 / DSM 11121 / KW20 / Rd).